We begin with the raw amino-acid sequence, 679 residues long: Methionine--tRNA ligase (679 aa).

The 'HIGH' region signature appears at 15-25 (PYANGPVHIGH). Positions 147, 150, 160, and 163 each coordinate Zn(2+). Positions 332–336 (KISTS) match the 'KMSKS' region motif. T335 provides a ligand contact to ATP. The 102-residue stretch at 578 to 679 (DFMKLDIRVG…REVKPGSEVK (102 aa)) folds into the tRNA-binding domain.

The protein belongs to the class-I aminoacyl-tRNA synthetase family. MetG type 1 subfamily. Homodimer. It depends on Zn(2+) as a cofactor.

It localises to the cytoplasm. It carries out the reaction tRNA(Met) + L-methionine + ATP = L-methionyl-tRNA(Met) + AMP + diphosphate. Its function is as follows. Is required not only for elongation of protein synthesis but also for the initiation of all mRNA translation through initiator tRNA(fMet) aminoacylation. In Bacteroides fragilis (strain ATCC 25285 / DSM 2151 / CCUG 4856 / JCM 11019 / LMG 10263 / NCTC 9343 / Onslow / VPI 2553 / EN-2), this protein is Methionine--tRNA ligase.